A 127-amino-acid chain; its full sequence is Protein KRTCAP2 homolog (127 aa).

4 helical membrane passes run 13 to 33 (LISLILWVIIFALLNIGSNFF), 41 to 61 (ILGGFVGSFLFFLQMTFIGAI), 65 to 85 (VKLLETVLAVIITAMISSSVH), and 87 to 107 (VSGTTSIIFSIGWIFYLNHAS).

It belongs to the KRTCAP2 family. Component of the oligosaccharyltransferase (OST) complex.

The protein localises to the membrane. Subunit of the oligosaccharyl transferase (OST) complex that catalyzes the initial transfer of a defined glycan (Glc(3)Man(9)GlcNAc(2) in eukaryotes) from the lipid carrier dolichol-pyrophosphate to an asparagine residue within an Asn-X-Ser/Thr consensus motif in nascent polypeptide chains, the first step in protein N-glycosylation. N-glycosylation occurs cotranslationally and the complex associates with the Sec61 complex at the channel-forming translocon complex that mediates protein translocation across the endoplasmic reticulum (ER). All subunits are required for a maximal enzyme activity. The protein is Protein KRTCAP2 homolog of Dictyostelium discoideum (Social amoeba).